We begin with the raw amino-acid sequence, 643 residues long: Hepatoma-derived growth factor-related protein 2 (643 aa).

Residues 7–64 (PGDLVFAKMKGYPHWPARIDDVKDGAVKPPPNKYPIFFYGTHETAFLAPKDLFPYEKC) form the PWWP domain. Disordered stretches follow at residues 88–450 (PQAS…KKPE) and 548–643 (LESQ…NQTS). A compositionally biased stretch (low complexity) spans 90–104 (ASYSLPPASVSSSDS). Basic and acidic residues predominate over residues 107-116 (PEEKSTARSD). Positions 176–187 (SEEENSDSDQDF) are enriched in acidic residues. The span at 194-204 (PRIQRRTTNLG) shows a compositional bias: polar residues. The span at 209-231 (IFAESDSKSDESEDEKKEEEQKK) shows a compositional bias: basic and acidic residues. The span at 232–249 (SPSSSSASSPSLSSSDSE) shows a compositional bias: low complexity. Basic and acidic residues-rich tracts occupy residues 290–353 (SVDR…DSSK), 373–382 (EDKKPVKEVK), and 417–450 (RPSE…KKPE). Residues 295 to 345 (SEWKKRDEERRRELEERRKKEQEEQLRRLREEEREEEERKKREKAEKGDKS) are a coiled coil. A compositionally biased stretch (polar residues) spans 549 to 559 (ESQQKTVQKVN). 2 stretches are compositionally biased toward basic and acidic residues: residues 560–575 (TAEK…GKVE) and 608–622 (NKTE…HAEH).

Belongs to the HDGF family.

Its subcellular location is the nucleus. The protein localises to the cytoplasm. Functionally, may act as a regulator of myogenesis. Promotes the repair of DNA double-strand breaks (DSBs) through the homologous recombination pathway by facilitating the recruitment of the DNA endonuclease RBBP8 to the DSBs. The sequence is that of Hepatoma-derived growth factor-related protein 2 (hdgfl2) from Xenopus tropicalis (Western clawed frog).